Here is a 51-residue protein sequence, read N- to C-terminus: Otoconin-90 (51 aa).

Belongs to the phospholipase A2 family. In terms of assembly, interacts with OTOL1.

The protein resides in the secreted. Its function is as follows. Major protein of the otoconia, a calcium carbonate structure in the saccule and utricle of the ear. Together with OTOL1, acts as a scaffold for otoconia biomineralization: sequesters calcium and forms interconnecting fibrils between otoconia that are incorporated into the calcium crystal structure. Together with OTOL1, modulates calcite crystal morphology and growth kinetics. It is unlikely that this protein has phospholipase A2 activity. In Cavia porcellus (Guinea pig), this protein is Otoconin-90 (OC90).